A 784-amino-acid chain; its full sequence is Protein-tyrosine-phosphatase MKP1 (784 aa).

Disordered stretches follow at residues 1–73 (MVGR…NSKA) and 94–118 (PKAG…TGER). Low complexity predominate over residues 22-34 (WRSASWSASRTAS). 2 positions are modified to phosphothreonine: threonine 64 and threonine 109. In terms of domain architecture, Tyrosine-protein phosphatase spans 149-291 (ECSKVADHIY…LLQCQKRVHA (143 aa)). The active-site Phosphocysteine intermediate is the cysteine 235. 235-241 (CCQGVSR) is a substrate binding site. Positions 488–586 (HSSGSPSSTT…ASPSLAERRG (99 aa)) are disordered. Composition is skewed to low complexity over residues 489–510 (SSGS…FLSP) and 521–553 (SLKS…LSLL). Residues 554–577 (PSQTSPKESRGVNTFLQPSPNRKA) show a composition bias toward polar residues. Phosphoserine is present on residues serine 558 and serine 572.

As to quaternary structure, interacts with MPK6. May interact with MPK3 and MPK4. In terms of processing, phosphorylated on threonine and serine residues by MPK6.

Its subcellular location is the cytoplasm. The protein resides in the cytosol. It carries out the reaction O-phospho-L-tyrosyl-[protein] + H2O = L-tyrosyl-[protein] + phosphate. In terms of biological role, protein-tyrosine-phosphatase that acts as a negative regulator of MPK6 and MPK3 signaling by dephosphorylating and repressing MPK6 and MPK3. Modulates defense response by repressing salicylic acid (SA) production, camalexin biosynthesis and SNC1-mediated responses. Acts as a negative regulator of MPK6-mediated pathogen-associated molecular pattern (PAMP) responses, including MPK6 and MPK3 activation, accumulation of extracellular reactive oxygen species and inhibition of seedling growth. Involved in UV-B stress tolerance. May be involved in salt and genotoxic stress responses. The polypeptide is Protein-tyrosine-phosphatase MKP1 (MKP1) (Arabidopsis thaliana (Mouse-ear cress)).